The primary structure comprises 242 residues: Probable transcriptional regulatory protein MHP7448_0474 (242 aa).

This sequence belongs to the TACO1 family.

Its subcellular location is the cytoplasm. This chain is Probable transcriptional regulatory protein MHP7448_0474, found in Mesomycoplasma hyopneumoniae (strain 7448) (Mycoplasma hyopneumoniae).